Consider the following 452-residue polypeptide: Coiled-coil domain-containing protein 71 (452 aa).

Residues 81 to 106 are disordered; that stretch reads PSQTKLQARAPTPAATSPPASAPQTA. Over residues 87–106 the composition is skewed to low complexity; that stretch reads QARAPTPAATSPPASAPQTA. At serine 129 the chain carries Phosphoserine. Disordered regions lie at residues 209 to 256 and 322 to 404; these read PLKV…GLQS and AREV…LGPG. Residues 279–344 are a coiled coil; that stretch reads KAAQAKAACA…QAKAKVARTQ (66 aa). Over residues 332–344 the composition is skewed to low complexity; that stretch reads KAVQAKAKVARTQ. Positions 377–386 are enriched in basic and acidic residues; the sequence is RTEEAKDLSP.

The sequence is that of Coiled-coil domain-containing protein 71 (CCDC71) from Bos taurus (Bovine).